Here is a 211-residue protein sequence, read N- to C-terminus: Mitotic spindle assembly checkpoint protein MAD2B (211 aa).

Positions 13–203 constitute an HORMA domain; that stretch reads QVVADVLCEF…SDILKMQLYV (191 aa). The interval 21–155 is mediates interaction with REV1 and REV3L and homodimerization; it reads EFLEVAVHLI…FTVLVHTREA (135 aa). A mediates interaction with ipaB region spans residues 150–211; that stretch reads VHTREAATRN…YVEERAHKGS (62 aa).

As to quaternary structure, homooligomer. Heterodimer with REV3L. This dimer forms the minimal DNA polymerase zeta complex (Pol-zeta2), with REV3L bearing DNA polymerase catalytic activity, although its activity is very low in this context. Component of the tetrameric Pol-zeta complex (Pol-zeta4), which consists of REV3L, MAD2L2, POLD2 and POLD3; Pol-zeta4 is the fully active form of DNA polymerase zeta. Component of the shieldin complex, consisting of SHLD1, SHLD2, SHLD3 and MAD2L2/REV7. Within the complex, SHLD2 forms a scaffold which interacts with a SHLD3-MAD2L2 subcomplex via its N-terminus, and with SHLD1 via its C-terminus. Interacts with REV1. Interacts with ADAM9. Interacts with CHAMP1. Interacts with FZR1 (in complex with the anaphase promoting complex APC). Interacts with CDC20; PubMed:11459825 could not detect the interaction. Interacts with RAN. Interacts with ELK1; the interaction is direct and recruits MAD2L2 to ELK1-specific promoters. May interact with the JNK kinases MAPK8 and/or MAPK9 to stimulate ELK1 phosphorylation and transcriptional activity upon DNA damage. Interacts with TCF7L2; prevents its binding to promoters and negatively modulates its transcriptional activity. Interacts with YY1AP1. Interacts with S.flexneri protein ipaB; prevents the interaction of MAD2L2 with FZR1 and CDC20 resulting in an activation of the anaphase-promoting complex APC and a cell cycle arrest. Interacts with PRCC; the interaction is direct. Interacts with POGZ. Interacts with ASTE1. As to expression, ubiquitously expressed.

The protein localises to the nucleus. It is found in the cytoplasm. It localises to the cytoskeleton. The protein resides in the spindle. Its subcellular location is the chromosome. Functionally, adapter protein able to interact with different proteins and involved in different biological processes. Mediates the interaction between the error-prone DNA polymerase zeta catalytic subunit REV3L and the inserter polymerase REV1, thereby mediating the second polymerase switching in translesion DNA synthesis. Translesion DNA synthesis releases the replication blockade of replicative polymerases, stalled in presence of DNA lesions. Component of the shieldin complex, which plays an important role in repair of DNA double-stranded breaks (DSBs). During G1 and S phase of the cell cycle, the complex functions downstream of TP53BP1 to promote non-homologous end joining (NHEJ) and suppress DNA end resection. Mediates various NHEJ-dependent processes including immunoglobulin class-switch recombination, and fusion of unprotected telomeres. May also regulate another aspect of cellular response to DNA damage through regulation of the JNK-mediated phosphorylation and activation of the transcriptional activator ELK1. Inhibits the FZR1- and probably CDC20-mediated activation of the anaphase promoting complex APC thereby regulating progression through the cell cycle. Regulates TCF7L2-mediated gene transcription and may play a role in epithelial-mesenchymal transdifferentiation. This chain is Mitotic spindle assembly checkpoint protein MAD2B (MAD2L2), found in Homo sapiens (Human).